Here is a 260-residue protein sequence, read N- to C-terminus: HLA class II histocompatibility antigen, DP alpha 1 chain (260 aa).

An N-terminal signal peptide occupies residues 1-28 (MRPEDRMFHIRAVILRALSLAFLLSLRG). An alpha-1 region spans residues 29–115 (AGAIKADHVS…QRSNHTQATN (87 aa)). Residues 29–222 (AGAIKADHVS…EPIQMPETTE (194 aa)) lie on the Extracellular side of the membrane. N-linked (GlcNAc...) asparagine glycosylation is found at Asn109 and Asn149. An alpha-2 region spans residues 116–209 (DPPEVTVFPK…GLDQPLLKHW (94 aa)). The region spanning 118–210 (PEVTVFPKEP…LDQPLLKHWE (93 aa)) is the Ig-like C1-type domain. The cysteines at positions 138 and 194 are disulfide-linked. Residues 210–222 (EAQEPIQMPETTE) form a connecting peptide region. Residues 223 to 245 (TVLCALGLVLGLVGIIVGTVLII) traverse the membrane as a helical segment. Residues 246 to 260 (KSLRSGHDPRAQGTL) lie on the Cytoplasmic side of the membrane.

The protein belongs to the MHC class II family. In terms of assembly, heterodimer of an alpha and a beta subunit; also referred as MHC class II molecule. In the endoplasmic reticulum (ER) it forms a heterononamer; 3 MHC class II molecules bind to a CD74 homotrimer (also known as invariant chain or HLA class II histocompatibility antigen gamma chain). In the endosomal/lysosomal system; CD74 undergoes sequential degradation by various proteases; leaving a small fragment termed CLIP on each MHC class II molecule. MHC class II molecule interacts with HLA_DM, and HLA_DO in B-cells, in order to release CLIP and facilitate the binding of antigenic peptides.

Its subcellular location is the cell membrane. The protein localises to the endoplasmic reticulum membrane. The protein resides in the golgi apparatus. It is found in the trans-Golgi network membrane. It localises to the endosome membrane. Its subcellular location is the lysosome membrane. Functionally, binds peptides derived from antigens that access the endocytic route of antigen presenting cells (APC) and presents them on the cell surface for recognition by the CD4 T-cells. The peptide binding cleft accommodates peptides of 10-30 residues. The peptides presented by MHC class II molecules are generated mostly by degradation of proteins that access the endocytic route, where they are processed by lysosomal proteases and other hydrolases. Exogenous antigens that have been endocytosed by the APC are thus readily available for presentation via MHC II molecules, and for this reason this antigen presentation pathway is usually referred to as exogenous. As membrane proteins on their way to degradation in lysosomes as part of their normal turn-over are also contained in the endosomal/lysosomal compartments, exogenous antigens must compete with those derived from endogenous components. Autophagy is also a source of endogenous peptides, autophagosomes constitutively fuse with MHC class II loading compartments. In addition to APCs, other cells of the gastrointestinal tract, such as epithelial cells, express MHC class II molecules and CD74 and act as APCs, which is an unusual trait of the GI tract. To produce a MHC class II molecule that presents an antigen, three MHC class II molecules (heterodimers of an alpha and a beta chain) associate with a CD74 trimer in the ER to form a heterononamer. Soon after the entry of this complex into the endosomal/lysosomal system where antigen processing occurs, CD74 undergoes a sequential degradation by various proteases, including CTSS and CTSL, leaving a small fragment termed CLIP (class-II-associated invariant chain peptide). The removal of CLIP is facilitated by HLA-DM via direct binding to the alpha-beta-CLIP complex so that CLIP is released. HLA-DM stabilizes MHC class II molecules until primary high affinity antigenic peptides are bound. The MHC II molecule bound to a peptide is then transported to the cell membrane surface. In B-cells, the interaction between HLA-DM and MHC class II molecules is regulated by HLA-DO. Primary dendritic cells (DCs) also to express HLA-DO. Lysosomal microenvironment has been implicated in the regulation of antigen loading into MHC II molecules, increased acidification produces increased proteolysis and efficient peptide loading. This chain is HLA class II histocompatibility antigen, DP alpha 1 chain (HLA-DPA1), found in Homo sapiens (Human).